We begin with the raw amino-acid sequence, 913 residues long: Pentatricopeptide repeat-containing protein At1g10270 (913 aa).

Positions 34–138 are disordered; sequence SLSPANEDPE…PNAPRLPDST (105 aa). The span at 64–73 shows a compositional bias: polar residues; it reads DPSQFQIPQN. Over residues 74 to 84 the composition is skewed to pro residues; it reads HTPPIPYPPIP. The Nuclear localization signal signature appears at 99 to 108; the sequence is ERRRRKRRLR. Basic and acidic residues predominate over residues 108-130; sequence RIEPPLHALRRDPSAPPPKRDPN. The segment at 134 to 167 is leucine-zipper; sequence LPDSTSALVGQRLNLHNRVQSLIRASDLDAASKL. PPR repeat units lie at residues 179 to 214, 215 to 250, 251 to 285, 286 to 316, 321 to 355, 356 to 390, 396 to 426, 435 to 469, 470 to 504, 505 to 539, and 540 to 574; these read TVFT…NIVP, NVVS…PFAP, SSVT…GQAA, DSTV…LKSK, DGIV…KFRM, HPPT…HAPP, NSDT…VGSK, DYLG…SLPA, DAPS…NLRV, VADF…EPKP, and DPSI…NVGV. The segment at 607–913 is disordered; sequence RNAGQSGNTP…QEKKVVELRN (307 aa). Positions 639–649 are enriched in polar residues; sequence WTSQGVVHSNS. 2 stretches are compositionally biased toward low complexity: residues 650–666 and 673–690; these read GWAN…AYKA and SWSN…SNQT. The 14 X 11 AA approximate tandem repeats of W-x(2)-Q-x(4)-Q-x(2) stretch occupies residues 674-858; sequence WSNTSDNQQQ…TAQQQWSNQT (185 aa). The span at 691–700 shows a compositional bias: polar residues; that stretch reads AGQQPPSWSR. The segment covering 706 to 727 has biased composition (low complexity); that stretch reads QQQQSWSQQSGWSSPSGHQQSW. The span at 728–761 shows a compositional bias: polar residues; the sequence is TNQTAGQQQPWANQTPGQQQQWANQTPGQQQQLA. Low complexity predominate over residues 762–791; the sequence is NQTPGQQQQWANQTPGQQQQWANQNNGHQQ. A compositionally biased stretch (polar residues) spans 792–814; it reads PWANQNTGHQQSWANQTPSQQQP. Residues 815-845 show a composition bias toward low complexity; sequence WANQTTGQQQGWGNQTTGQQQQWANQTAGQQ. Composition is skewed to polar residues over residues 846-867 and 875-894; these read SGWT…SQWL and ANQT…QQEP. The segment covering 899 to 913 has biased composition (basic and acidic residues); the sequence is ECQETQEKKVVELRN.

It belongs to the PPR family. P subfamily. In terms of assembly, interacts with RPB36B through its WQQ domain. Ubiquitous but preferentially expressed in gametophytes and young embryos.

It localises to the nucleus. In terms of biological role, may function as a transcriptional regulator essential for early embryogenesis. The chain is Pentatricopeptide repeat-containing protein At1g10270 (GRP23) from Arabidopsis thaliana (Mouse-ear cress).